Here is a 248-residue protein sequence, read N- to C-terminus: 3-deoxy-manno-octulosonate cytidylyltransferase (248 aa).

The protein belongs to the KdsB family.

The protein localises to the cytoplasm. The enzyme catalyses 3-deoxy-alpha-D-manno-oct-2-ulosonate + CTP = CMP-3-deoxy-beta-D-manno-octulosonate + diphosphate. It functions in the pathway nucleotide-sugar biosynthesis; CMP-3-deoxy-D-manno-octulosonate biosynthesis; CMP-3-deoxy-D-manno-octulosonate from 3-deoxy-D-manno-octulosonate and CTP: step 1/1. It participates in bacterial outer membrane biogenesis; lipopolysaccharide biosynthesis. Activates KDO (a required 8-carbon sugar) for incorporation into bacterial lipopolysaccharide in Gram-negative bacteria. This is 3-deoxy-manno-octulosonate cytidylyltransferase from Salmonella arizonae (strain ATCC BAA-731 / CDC346-86 / RSK2980).